A 278-amino-acid polypeptide reads, in one-letter code: Ribosomal RNA small subunit methyltransferase A (278 aa).

S-adenosyl-L-methionine is bound by residues N27, L29, G54, E75, D101, and N122.

It belongs to the class I-like SAM-binding methyltransferase superfamily. rRNA adenine N(6)-methyltransferase family. RsmA subfamily.

It localises to the cytoplasm. It carries out the reaction adenosine(1518)/adenosine(1519) in 16S rRNA + 4 S-adenosyl-L-methionine = N(6)-dimethyladenosine(1518)/N(6)-dimethyladenosine(1519) in 16S rRNA + 4 S-adenosyl-L-homocysteine + 4 H(+). In terms of biological role, specifically dimethylates two adjacent adenosines (A1518 and A1519) in the loop of a conserved hairpin near the 3'-end of 16S rRNA in the 30S particle. May play a critical role in biogenesis of 30S subunits. This chain is Ribosomal RNA small subunit methyltransferase A, found in Brucella anthropi (strain ATCC 49188 / DSM 6882 / CCUG 24695 / JCM 21032 / LMG 3331 / NBRC 15819 / NCTC 12168 / Alc 37) (Ochrobactrum anthropi).